The sequence spans 641 residues: MIFLKNICKNIGENAILKNVSLSIEKGEFVAIIGQSGSGKTSLLNIIGTLDTPSSGTYVFDEYEVTKLNNDEKARLRREKIGFIFQRYNLLSLLSAKENVSLPAVYAGKNLQERSQNAKKLLNDLELAHKLDSKPNELSGGQQQRVSIARALINGGELILADEPTGALDSKSGIMVLEILQKLNEQGHTIVLVTHDPKIAAQAKRVIEIKDGEILSDTKKEKAQEKLILKTMPKEKKTLTLLKNQAFECFKIAYSSILAHKLRSILTMLGIIIGIASVVCVVALGLGSQAKVLESIARLGTNTIEIRPGKGFGDLRSGKTRLNFSDLETLRSLEYLEAVDAHSNTSGVATYTNISLSARAEGVGVNNFAIEGLRIDAGRILNNDDVKNSTNVAVLDFNAKKNLFPDEKSENILGRVVLFNSQPFKIIGVLQKDTDKPIEDNVVRFYIPYTTLMNKLTGDRNLREIIVKVKDDVSSTLAENAIIRILEIKRGQKDFFTFNSDTFKQAITANKRTTTILTACVAVIALIVGGIGVMNIMLVSVSERTREIGIRMAIGARREDIMMQFLIEAVMICTIGAILGVILSIFVIFAFNTLSTDFPMILNAYSVLLGLLSSMFIGVVFGFFPARNAANLNPISALSKE.

In terms of domain architecture, ABC transporter spans Ile-2–Lys-236. An ATP-binding site is contributed by Gly-34–Thr-41. Transmembrane regions (helical) follow at residues Ile-265–Gly-285, Ala-519–Val-539, Met-571–Phe-591, and Ala-604–Phe-624.

This sequence belongs to the ABC transporter superfamily. Macrolide exporter (TC 3.A.1.122) family. Homodimer.

The protein resides in the cell inner membrane. Its function is as follows. Non-canonical ABC transporter that contains transmembrane domains (TMD), which form a pore in the inner membrane, and an ATP-binding domain (NBD), which is responsible for energy generation. Confers resistance against macrolides. This Campylobacter jejuni subsp. jejuni serotype O:2 (strain ATCC 700819 / NCTC 11168) protein is Macrolide export ATP-binding/permease protein MacB.